Here is a 1646-residue protein sequence, read N- to C-terminus: Monensin-resistant homolog 2 (1646 aa).

It belongs to the MON2 family.

The protein resides in the golgi apparatus. May be required for traffic between late Golgi and early endosomes. In Caenorhabditis elegans, this protein is Monensin-resistant homolog 2 (mon-2).